Here is a 1571-residue protein sequence, read N- to C-terminus: Pentafunctional AROM polypeptide (1571 aa).

The 3-dehydroquinate synthase stretch occupies residues 1–380 (MTSVEKVSIL…YQLKAHQVSK (380 aa)). NAD(+) contacts are provided by residues 43–45 (DTN), 81–84 (ENNK), 112–114 (GGV), and Asp117. Arg128 is a 7-phospho-2-dehydro-3-deoxy-D-arabino-heptonate binding site. 137–138 (TS) contributes to the NAD(+) binding site. Positions 144 and 150 each coordinate 7-phospho-2-dehydro-3-deoxy-D-arabino-heptonate. Position 159 (Lys159) interacts with NAD(+). Asn160 is a 7-phospho-2-dehydro-3-deoxy-D-arabino-heptonate binding site. NAD(+) contacts are provided by residues 177 to 180 (FLET) and Asn188. Residue Glu192 coordinates Zn(2+). 7-phospho-2-dehydro-3-deoxy-D-arabino-heptonate is bound by residues 192–195 (EVVK) and Lys244. The active-site Proton acceptor; for 3-dehydroquinate synthase activity is the Glu254. 7-phospho-2-dehydro-3-deoxy-D-arabino-heptonate is bound by residues 258–262 (RNLLN) and His265. His265 provides a ligand contact to Zn(2+). The active-site Proton acceptor; for 3-dehydroquinate synthase activity is the His269. Positions 281 and 352 each coordinate 7-phospho-2-dehydro-3-deoxy-D-arabino-heptonate. Residue His281 coordinates Zn(2+). The interval 393–843 (VHPFDDKLIP…WDILHTKFKV (451 aa)) is EPSP synthase. The For EPSP synthase activity role is filled by Cys825. The segment at 868 to 1058 (KRSIIVIGMR…IPKKRSFYTS (191 aa)) is shikimate kinase. 875-882 (GMRGAGKS) contributes to the ATP binding site. Residues 1059 to 1271 (LTFSDLTEVA…GNEGALDVAQ (213 aa)) are 3-dehydroquinase. The active-site Schiff-base intermediate with substrate; for 3-dehydroquinate dehydratase activity is Lys1204. The segment at 1284 to 1571 (EKHFWIVGNP…DVVHDAVVNQ (288 aa)) is shikimate dehydrogenase.

The protein in the N-terminal section; belongs to the sugar phosphate cyclases superfamily. Dehydroquinate synthase family. It in the 2nd section; belongs to the EPSP synthase family. This sequence in the 3rd section; belongs to the shikimate kinase family. In the 4th section; belongs to the type-I 3-dehydroquinase family. The protein in the C-terminal section; belongs to the shikimate dehydrogenase family. Homodimer. The cofactor is Zn(2+).

The protein localises to the cytoplasm. It carries out the reaction 7-phospho-2-dehydro-3-deoxy-D-arabino-heptonate = 3-dehydroquinate + phosphate. The catalysed reaction is 3-dehydroquinate = 3-dehydroshikimate + H2O. It catalyses the reaction shikimate + NADP(+) = 3-dehydroshikimate + NADPH + H(+). The enzyme catalyses shikimate + ATP = 3-phosphoshikimate + ADP + H(+). It carries out the reaction 3-phosphoshikimate + phosphoenolpyruvate = 5-O-(1-carboxyvinyl)-3-phosphoshikimate + phosphate. Its pathway is metabolic intermediate biosynthesis; chorismate biosynthesis; chorismate from D-erythrose 4-phosphate and phosphoenolpyruvate: step 2/7. It participates in metabolic intermediate biosynthesis; chorismate biosynthesis; chorismate from D-erythrose 4-phosphate and phosphoenolpyruvate: step 3/7. It functions in the pathway metabolic intermediate biosynthesis; chorismate biosynthesis; chorismate from D-erythrose 4-phosphate and phosphoenolpyruvate: step 4/7. The protein operates within metabolic intermediate biosynthesis; chorismate biosynthesis; chorismate from D-erythrose 4-phosphate and phosphoenolpyruvate: step 5/7. Its pathway is metabolic intermediate biosynthesis; chorismate biosynthesis; chorismate from D-erythrose 4-phosphate and phosphoenolpyruvate: step 6/7. The AROM polypeptide catalyzes 5 consecutive enzymatic reactions in prechorismate polyaromatic amino acid biosynthesis. This is Pentafunctional AROM polypeptide from Scheffersomyces stipitis (strain ATCC 58785 / CBS 6054 / NBRC 10063 / NRRL Y-11545) (Yeast).